The primary structure comprises 383 residues: Non-structural maintenance of chromosomes element 4 homolog B (383 aa).

The segment covering 1–22 (MRNSVKWETELTGDRSRRREAD) has biased composition (basic and acidic residues). 3 disordered regions span residues 1-59 (MRNS…EQGI), 198-231 (MKQRKSRVGNRKRTKPGAGVKPEEVDDTEAEKKS), and 355-383 (QGSVIQEETVVEDSSNMEGDNEDSKNGGL). A compositionally biased stretch (basic residues) spans 201-212 (RKSRVGNRKRTK). Residues 355–372 (QGSVIQEETVVEDSSNME) show a composition bias toward polar residues.

It belongs to the NSE4 family. As to quaternary structure, interacts with SMC5, SMC6A or SMC6B. The SMC5-SMC6 complex is composed of the SMC5 and SMC6 heterodimer attached via their hinge domain and from the non-SMC subunit NSE4A or NSE4B. In terms of tissue distribution, not expressed in seedlings, rosette leaves and floral buds.

It is found in the nucleus. Its function is as follows. Component of the SMC5-SMC6 complex, that promotes sister chromatid alignment after DNA damage and facilitates double-stranded DNA breaks (DSBs) repair via homologous recombination between sister chromatids. This is Non-structural maintenance of chromosomes element 4 homolog B (NSE4B) from Arabidopsis thaliana (Mouse-ear cress).